Consider the following 323-residue polypeptide: MIRSVVRGFGAALPKRVMTNRDMEAIVDTSDEWIVQRTGIRQRYVAGDDETTASLGEAAARAALANGGLTPADIDLVICATSTPDNTFPATSVNIQNRLGMSHGFAFDVQAVCTGFVYAVTTADAYIRGGLAKRVLVIGAETFSRILDWNDRTTCVLFGDGAGAIILEATEGEGTVADRGVLTAHLRSDGSHKEKLYVDGGPSTTGTVGKLRMEGREVFKYAVGMITDVIQAAFDSTGTTADDLDWLVPHQANRRIIDGSAKKLNIDAAKVVITVDLHGNTSAASIPLALATAAGDGRIKKGDLVMLEAMGGGFTWGAVLLRW.

Residues Cys-113 and His-250 contribute to the active site. Residues 251–255 form an ACP-binding region; it reads QANRR. Asn-280 is a catalytic residue.

This sequence belongs to the thiolase-like superfamily. FabH family. In terms of assembly, homodimer.

The protein localises to the cytoplasm. It catalyses the reaction malonyl-[ACP] + acetyl-CoA + H(+) = 3-oxobutanoyl-[ACP] + CO2 + CoA. Its pathway is lipid metabolism; fatty acid biosynthesis. Functionally, catalyzes the condensation reaction of fatty acid synthesis by the addition to an acyl acceptor of two carbons from malonyl-ACP. Catalyzes the first condensation reaction which initiates fatty acid synthesis and may therefore play a role in governing the total rate of fatty acid production. Possesses both acetoacetyl-ACP synthase and acetyl transacylase activities. Its substrate specificity determines the biosynthesis of branched-chain and/or straight-chain of fatty acids. The polypeptide is Beta-ketoacyl-[acyl-carrier-protein] synthase III (Rhizobium johnstonii (strain DSM 114642 / LMG 32736 / 3841) (Rhizobium leguminosarum bv. viciae)).